A 114-amino-acid polypeptide reads, in one-letter code: Histone H3-5 (114 aa).

A disordered region spans residues 1–29 (NTGAKAPRKQLANKAARKSTNVNAVSGVK).

Belongs to the histone H3 family. As to quaternary structure, the nucleosome is a histone octamer containing two molecules each of H2A, H2B, H3 and H4 assembled in one H3-H4 heterotetramer and two H2A-H2B heterodimers. The octamer wraps approximately 147 bp of DNA.

It is found in the nucleus. The protein localises to the chromosome. Core component of nucleosome. Nucleosomes wrap and compact DNA into chromatin, limiting DNA accessibility to the cellular machineries which require DNA as a template. Histones thereby play a central role in transcription regulation, DNA repair, DNA replication and chromosomal stability. DNA accessibility is regulated via a complex set of post-translational modifications of histones, also called histone code, and nucleosome remodeling. This Stylonychia lemnae (Ciliate) protein is Histone H3-5 (H3-5).